We begin with the raw amino-acid sequence, 319 residues long: Methionyl-tRNA formyltransferase (319 aa).

115 to 118 contacts (6S)-5,6,7,8-tetrahydrofolate; sequence SLLP.

It belongs to the Fmt family.

It catalyses the reaction L-methionyl-tRNA(fMet) + (6R)-10-formyltetrahydrofolate = N-formyl-L-methionyl-tRNA(fMet) + (6S)-5,6,7,8-tetrahydrofolate + H(+). Functionally, attaches a formyl group to the free amino group of methionyl-tRNA(fMet). The formyl group appears to play a dual role in the initiator identity of N-formylmethionyl-tRNA by promoting its recognition by IF2 and preventing the misappropriation of this tRNA by the elongation apparatus. The protein is Methionyl-tRNA formyltransferase of Lactococcus lactis subsp. lactis (strain IL1403) (Streptococcus lactis).